Consider the following 527-residue polypeptide: Type 2 DNA topoisomerase 6 subunit B (527 aa).

ATP-binding positions include Asn39, Asp73, 94–95 (SK), 103–110 (GVFGLGLK), and Lys421.

Belongs to the TOP6B family. As to quaternary structure, homodimer. Heterotetramer of two Top6A and two Top6B chains.

The enzyme catalyses ATP-dependent breakage, passage and rejoining of double-stranded DNA.. Relaxes both positive and negative superturns and exhibits a strong decatenase activity. This Pyrobaculum aerophilum (strain ATCC 51768 / DSM 7523 / JCM 9630 / CIP 104966 / NBRC 100827 / IM2) protein is Type 2 DNA topoisomerase 6 subunit B.